Here is a 76-residue protein sequence, read N- to C-terminus: Conotoxin Cl6.4 (76 aa).

The first 19 residues, 1–19 (MTLTFLLVVALCMLTTCHT), serve as a signal peptide directing secretion. A propeptide spanning residues 20–47 (ENYRDSQKVSPVRSIGKTQFARSLRLSE) is cleaved from the precursor. Disulfide bonds link Cys50–Cys66, Cys57–Cys70, and Cys65–Cys75.

In terms of tissue distribution, expressed by the venom duct.

Its subcellular location is the secreted. This is Conotoxin Cl6.4 from Californiconus californicus (California cone).